A 148-amino-acid chain; its full sequence is Large ribosomal subunit protein uL15 (148 aa).

The interval 1 to 47 (MAFSLENLRPAPGSRPKSKRVGRGSSSGKGKTSSRGHKGQGRGTGKV) is disordered.

Belongs to the universal ribosomal protein uL15 family. As to quaternary structure, part of the 50S ribosomal subunit.

Functionally, binds to the 23S rRNA. In Kosmotoga olearia (strain ATCC BAA-1733 / DSM 21960 / TBF 19.5.1), this protein is Large ribosomal subunit protein uL15.